A 57-amino-acid chain; its full sequence is Large ribosomal subunit protein bL32 (57 aa).

This sequence belongs to the bacterial ribosomal protein bL32 family.

This is Large ribosomal subunit protein bL32 from Streptomyces griseus subsp. griseus (strain JCM 4626 / CBS 651.72 / NBRC 13350 / KCC S-0626 / ISP 5235).